The primary structure comprises 447 residues: uncharacterized protein (447 aa).

The next 2 helical transmembrane spans lie at 380 to 400 and 412 to 432; these read VLEI…LLLT and ILGF…GVYV.

It is found in the cell membrane. This is an uncharacterized protein from Methanocaldococcus jannaschii (strain ATCC 43067 / DSM 2661 / JAL-1 / JCM 10045 / NBRC 100440) (Methanococcus jannaschii).